The chain runs to 215 residues: Ras-related protein Rab-5A (215 aa).

Ser-29, Ala-30, Gly-32, Lys-33, Ser-34, Ser-35, His-46, Glu-47, Thr-52, and Gly-78 together coordinate GTP. A Mg(2+)-binding site is contributed by Ser-34. Short sequence motifs (switch) lie at residues 44–56 (QFHE…IGAA) and 77–93 (AGQE…YRGA). Thr-52 provides a ligand contact to Mg(2+). Ser-84 carries the post-translational modification Phosphoserine. Residues Asn-133, Lys-134, Asp-136, Ala-164, and Lys-165 each coordinate GTP. A disordered region spans residues 181-215 (LPKNEPQNPGANSARGRGVDLTEPAQPARSQCCSN). 2 S-geranylgeranyl cysteine lipidation sites follow: Cys-212 and Cys-213.

It belongs to the small GTPase superfamily. Rab family. In terms of assembly, interacts with GDI1; this promotes dissociation from membranes; phosphorylation at Ser-84 disrupts this interaction. Interacts with GDI2; phosphorylation at Ser-84 disrupts the interaction. Interacts with EEA1. Interacts with RIN1 and GAPVD1, which regulate its pathway, probably by acting as a GEF. Interacts with ALS2CL, SUN2, ZFYVE20 and RUFY1. Interacts with RABEP1; one RABEP1 homodimer binds two RAB5A chains, but at opposite sides of the dimer. Interacts with SGSM1, SGSM3 and PIK3CB. Interacts with RINL. May be a component of a complex composed of RAB5A, DYN2 and PIK3C3. Does not interact with the BLOC-3 complex (heterodimer of HPS1 and HPS4). Interacts with CLN5. Interacts with APPL2. Interacts with F8A1/F8A2/F8A3. Found in a complex with F8A1/F8A2/F8A3, HTT and RAB5A; mediates the recruitment of HTT by RAB5A onto early endosomes. Interacts with ATP9A. Interacts with PPP1R21; mediates the recruitment of FERRY complex by RAB5A onto early endosomes. The cofactor is Mg(2+). Phosphorylation of Ser-84 in the switch II region by LRRK2 prevents the association of RAB regulatory proteins, including RAB GDP dissociation inhibitors GDI1 and GDI2.

The protein localises to the cell membrane. The protein resides in the early endosome membrane. Its subcellular location is the melanosome. It is found in the cytoplasmic vesicle. It localises to the cell projection. The protein localises to the ruffle. The protein resides in the membrane. Its subcellular location is the cytoplasm. It is found in the cytosol. It localises to the phagosome membrane. The protein localises to the endosome membrane. It carries out the reaction GTP + H2O = GDP + phosphate + H(+). Its activity is regulated as follows. Regulated by guanine nucleotide exchange factors (GEFs) including RINL, which promote the exchange of bound GDP for free GTP. Regulated by GTPase activating proteins (GAPs) which increase the GTP hydrolysis activity. Inhibited by GDP dissociation inhibitors (GDIs). Its function is as follows. The small GTPases Rab are key regulators of intracellular membrane trafficking, from the formation of transport vesicles to their fusion with membranes. Rabs cycle between an inactive GDP-bound form and an active GTP-bound form that is able to recruit to membranes different sets of downstream effectors directly responsible for vesicle formation, movement, tethering and fusion. RAB5A is required for the fusion of plasma membranes and early endosomes. Contributes to the regulation of filopodia extension. Required for the exosomal release of SDCBP, CD63, PDCD6IP and syndecan. Regulates maturation of apoptotic cell-containing phagosomes, probably downstream of DYN2 and PIK3C3. This is Ras-related protein Rab-5A from Rattus norvegicus (Rat).